Reading from the N-terminus, the 269-residue chain is Undecaprenyl-diphosphatase (269 aa).

The next 6 membrane-spanning stretches (helical) occupy residues Lys-43–Tyr-63, Phe-82–Gly-102, Leu-108–Val-128, Ala-188–Val-208, Met-222–Ile-242, and Asp-249–Trp-269.

The protein belongs to the UppP family.

It is found in the cell inner membrane. It carries out the reaction di-trans,octa-cis-undecaprenyl diphosphate + H2O = di-trans,octa-cis-undecaprenyl phosphate + phosphate + H(+). Functionally, catalyzes the dephosphorylation of undecaprenyl diphosphate (UPP). Confers resistance to bacitracin. The sequence is that of Undecaprenyl-diphosphatase from Methylobacillus flagellatus (strain ATCC 51484 / DSM 6875 / VKM B-1610 / KT).